The sequence spans 541 residues: Protein yellow (541 aa).

The signal sequence occupies residues 1-21 (MFQDKGWILVTLITLVTPSWA). 2 N-linked (GlcNAc...) asparagine glycosylation sites follow: asparagine 144 and asparagine 215. The disordered stretch occupies residues 443–463 (QKPQTSWASSPPPPSRTYLPA).

It belongs to the major royal jelly protein family.

It is found in the secreted. Its function is as follows. Controls the pigmentation pattern of the adult cuticle and larval mouth parts. The chain is Protein yellow (y) from Drosophila melanogaster (Fruit fly).